We begin with the raw amino-acid sequence, 896 residues long: Microsomal triglyceride transfer protein large subunit (896 aa).

Residues 1-21 (MILLAVLFLCFFSSYSASVKG) form the signal peptide. The Vitellogenin domain occupies 28–659 (LNNERLYKLT…IFQYIGKAEL (632 aa)). Residues cysteine 174 and cysteine 194 are joined by a disulfide bond.

Heterodimer; heterodimerizes with the protein disulfide isomerase (P4HB/PDI). Interacts with APOB. Interacts with PRAP1.

Its subcellular location is the endoplasmic reticulum. The protein localises to the golgi apparatus. The enzyme catalyses a 1,2-diacyl-sn-glycero-3-phosphocholine(in) = a 1,2-diacyl-sn-glycero-3-phosphocholine(out). It catalyses the reaction a 1,2-diacyl-sn-glycero-3-phosphoethanolamine(in) = a 1,2-diacyl-sn-glycero-3-phosphoethanolamine(out). The catalysed reaction is a cholesterol ester(in) = a cholesterol ester(out). It carries out the reaction a triacyl-sn-glycerol(in) = a triacyl-sn-glycerol(out). In terms of biological role, catalyzes the transport of triglyceride, cholesteryl ester, and phospholipid between phospholipid surfaces. Required for the assembly and secretion of plasma lipoproteins that contain apolipoprotein B. May be involved in regulating cholesteryl ester biosynthesis in cells that produce lipoproteins. This chain is Microsomal triglyceride transfer protein large subunit (Mttp), found in Rattus norvegicus (Rat).